Reading from the N-terminus, the 555-residue chain is Formate--tetrahydrofolate ligase (555 aa).

An ATP-binding site is contributed by 65 to 72 (TPAGEGKS).

Belongs to the formate--tetrahydrofolate ligase family.

The catalysed reaction is (6S)-5,6,7,8-tetrahydrofolate + formate + ATP = (6R)-10-formyltetrahydrofolate + ADP + phosphate. Its pathway is one-carbon metabolism; tetrahydrofolate interconversion. The sequence is that of Formate--tetrahydrofolate ligase from Staphylococcus aureus (strain MRSA252).